Reading from the N-terminus, the 270-residue chain is G-box-binding factor 4 (270 aa).

A disordered region spans residues 1–46; it reads MASFKLMSSSNSDLSRRNSSSASSSPSIRSSHHLRPNPHADHSRIS. Over residues 8 to 29 the composition is skewed to low complexity; the sequence is SSSNSDLSRRNSSSASSSPSIR. Phosphoserine is present on Ser27. The bZIP domain maps to 187–250; it reads AAQRQKRMIK…YKKLMEVLIP (64 aa). The basic motif stretch occupies residues 190 to 208; the sequence is RQKRMIKNRESAARSRERK. Positions 215–229 are leucine-zipper; the sequence is LETLAAKLEEENEQL. A disordered region spans residues 250–270; sequence PVDEKPRPPSRPLSRSHSLEW. The span at 261-270 shows a compositional bias: low complexity; sequence PLSRSHSLEW.

The protein belongs to the bZIP family. DNA-binding heterodimer with GBF2 and GBF3; non DNA-binding homodimer.

It localises to the nucleus. Binds to the G-box motif (5'-CCACGTGG-3') of the rbcS-1A gene promoter. G-box and G-box-like motifs are cis-acting elements defined in promoters of certain plant genes which are regulated by such diverse stimuli as light-induction or hormone control. This is G-box-binding factor 4 (GBF4) from Arabidopsis thaliana (Mouse-ear cress).